The following is a 302-amino-acid chain: tRNA pseudouridine synthase B (302 aa).

The active-site Nucleophile is the aspartate 45.

The protein belongs to the pseudouridine synthase TruB family. Type 1 subfamily.

The catalysed reaction is uridine(55) in tRNA = pseudouridine(55) in tRNA. In terms of biological role, responsible for synthesis of pseudouridine from uracil-55 in the psi GC loop of transfer RNAs. The polypeptide is tRNA pseudouridine synthase B (Francisella tularensis subsp. holarctica (strain FTNF002-00 / FTA)).